A 432-amino-acid chain; its full sequence is Serine hydroxymethyltransferase (432 aa).

Residues L127 and 131 to 133 (GHL) each bind (6S)-5,6,7,8-tetrahydrofolate. K236 is modified (N6-(pyridoxal phosphate)lysine).

The protein belongs to the SHMT family. As to quaternary structure, homodimer. Requires pyridoxal 5'-phosphate as cofactor.

It localises to the cytoplasm. The enzyme catalyses (6R)-5,10-methylene-5,6,7,8-tetrahydrofolate + glycine + H2O = (6S)-5,6,7,8-tetrahydrofolate + L-serine. Its pathway is one-carbon metabolism; tetrahydrofolate interconversion. It participates in amino-acid biosynthesis; glycine biosynthesis; glycine from L-serine: step 1/1. Its function is as follows. Catalyzes the reversible interconversion of serine and glycine with tetrahydrofolate (THF) serving as the one-carbon carrier. This reaction serves as the major source of one-carbon groups required for the biosynthesis of purines, thymidylate, methionine, and other important biomolecules. Also exhibits THF-independent aldolase activity toward beta-hydroxyamino acids, producing glycine and aldehydes, via a retro-aldol mechanism. The sequence is that of Serine hydroxymethyltransferase from Rhizobium etli (strain ATCC 51251 / DSM 11541 / JCM 21823 / NBRC 15573 / CFN 42).